We begin with the raw amino-acid sequence, 263 residues long: Shikimate dehydrogenase (NADP(+)) (263 aa).

Residues 14–16 (SLS) and threonine 60 each bind shikimate. Residue lysine 64 is the Proton acceptor of the active site. 2 residues coordinate shikimate: asparagine 85 and aspartate 100. NADP(+)-binding positions include 123–127 (GAGGA), 146–151 (NRTPQR), and leucine 205. Tyrosine 207 serves as a coordination point for shikimate. Glycine 228 lines the NADP(+) pocket. Residue glutamine 235 participates in shikimate binding.

Belongs to the shikimate dehydrogenase family. As to quaternary structure, homodimer.

The enzyme catalyses shikimate + NADP(+) = 3-dehydroshikimate + NADPH + H(+). Its pathway is metabolic intermediate biosynthesis; chorismate biosynthesis; chorismate from D-erythrose 4-phosphate and phosphoenolpyruvate: step 4/7. Its function is as follows. Involved in the biosynthesis of the chorismate, which leads to the biosynthesis of aromatic amino acids. Catalyzes the reversible NADPH linked reduction of 3-dehydroshikimate (DHSA) to yield shikimate (SA). This Thermus thermophilus (strain ATCC 27634 / DSM 579 / HB8) protein is Shikimate dehydrogenase (NADP(+)).